A 214-amino-acid chain; its full sequence is MTGTFITFEGPDGAGKTSVLKTLIPQLEQHVRVPLHLTREPGGAKISETIREVILDPANTAMDARTEALLYAASRRQHLVEVIQPALAQGDIVVCDRFVDSSVAYQGGGREIGPDAVLKMNQFATAGLEPALTLYLDVPVQVGLDRIKSHQNERQYDRLDQESLAFHERVHDAYMTLIVDNPQRIVSIDATEPLEKVVAACFQTITRRFPELFN.

10 to 17 (GPDGAGKT) provides a ligand contact to ATP.

The protein belongs to the thymidylate kinase family.

It carries out the reaction dTMP + ATP = dTDP + ADP. Its function is as follows. Phosphorylation of dTMP to form dTDP in both de novo and salvage pathways of dTTP synthesis. This chain is Thymidylate kinase, found in Lacticaseibacillus casei (strain BL23) (Lactobacillus casei).